Here is a 391-residue protein sequence, read N- to C-terminus: ATP-sensitive inward rectifier potassium channel 1 (391 aa).

The Cytoplasmic portion of the chain corresponds to 1–77 (MNASSRNVFD…IWTTVLDLKW (77 aa)). Residue serine 44 is modified to Phosphoserine; by SGK1. A helical membrane pass occupies residues 78-102 (RYKMTIFITAFLGSWFFFGLLWYAV). Residues 103-127 (AYIHKDLPEFHPSANHTPCVENING) are Extracellular-facing. An N-linked (GlcNAc...) asparagine glycan is attached at asparagine 117. Residues 128 to 139 (LTSAFLFSLETQ) constitute an intramembrane region (helical; Pore-forming). An intramembrane region (pore-forming) is located at residues 140 to 146 (VTIGYGF). The Selectivity filter signature appears at 141–146 (TIGYGF). At 147–155 (RCVTEQCAT) the chain is on the extracellular side. A helical transmembrane segment spans residues 156 to 177 (AIFLLIFQSILGVIINSFMCGA). Residues 178-391 (ILAKISRPKK…EVNETDDTKM (214 aa)) lie on the Cytoplasmic side of the membrane. Residues 180 to 207 (AKISRPKKRAKTITFSKNAVISKRGGKL) form a polyphosphoinositide (PIP2)-binding region. 223 to 230 (GSHIYGKL) contacts ATP.

It belongs to the inward rectifier-type potassium channel (TC 1.A.2.1) family. KCNJ1 subfamily. Interacts with SGK1 and SLC9A3R2/NHERF2. Post-translationally, phosphorylation at Ser-44 by SGK1 is necessary for its expression at the cell membrane. As to expression, in the kidney and pancreatic islets. Lower levels in skeletal muscle, pancreas, spleen, brain, heart and liver.

Its subcellular location is the cell membrane. It carries out the reaction K(+)(in) = K(+)(out). Inhibited by WNK3. Activated by phosphatidylinositol 4,5 biphosphate (PtdIns(4,5)P2). Inward rectifier potassium channels are characterized by a greater tendency to allow potassium to flow into the cell rather than out of it. Their voltage dependence is regulated by the concentration of extracellular potassium; as external potassium is raised, the voltage range of the channel opening shifts to more positive voltages. The inward rectification is mainly due to the blockage of outward current by internal magnesium. This channel is activated by internal ATP and can be blocked by external barium. In the kidney, probably plays a major role in potassium homeostasis. The sequence is that of ATP-sensitive inward rectifier potassium channel 1 (KCNJ1) from Homo sapiens (Human).